The following is a 689-amino-acid chain: Elongation factor G (689 aa).

The region spanning 8-282 (ERTRNIGIMA…AVVDYLPAPT (275 aa)) is the tr-type G domain. Residues 17–24 (AHIDAGKT), 81–85 (DTPGH), and 135–138 (NKMD) each bind GTP.

The protein belongs to the TRAFAC class translation factor GTPase superfamily. Classic translation factor GTPase family. EF-G/EF-2 subfamily.

Its subcellular location is the cytoplasm. In terms of biological role, catalyzes the GTP-dependent ribosomal translocation step during translation elongation. During this step, the ribosome changes from the pre-translocational (PRE) to the post-translocational (POST) state as the newly formed A-site-bound peptidyl-tRNA and P-site-bound deacylated tRNA move to the P and E sites, respectively. Catalyzes the coordinated movement of the two tRNA molecules, the mRNA and conformational changes in the ribosome. The polypeptide is Elongation factor G (Desulforudis audaxviator (strain MP104C)).